A 792-amino-acid polypeptide reads, in one-letter code: Phenylalanine--tRNA ligase beta subunit (792 aa).

Residues 39-150 (APAFHKVVVA…PDAPVGTDFR (112 aa)) enclose the tRNA-binding domain. One can recognise a B5 domain in the interval 405–480 (PARDPIRLGL…RMYGYNRIAA (76 aa)). The Mg(2+) site is built by aspartate 458, aspartate 464, glutamate 467, and glutamate 468. Residues 698–791 (SKYPPIRRDI…LENRFGARLR (94 aa)) enclose the FDX-ACB domain.

The protein belongs to the phenylalanyl-tRNA synthetase beta subunit family. Type 1 subfamily. Tetramer of two alpha and two beta subunits. Requires Mg(2+) as cofactor.

It localises to the cytoplasm. The enzyme catalyses tRNA(Phe) + L-phenylalanine + ATP = L-phenylalanyl-tRNA(Phe) + AMP + diphosphate + H(+). The sequence is that of Phenylalanine--tRNA ligase beta subunit from Nitrosospira multiformis (strain ATCC 25196 / NCIMB 11849 / C 71).